A 235-amino-acid chain; its full sequence is Probable pyridoxal 5'-phosphate synthase subunit PDX1 (235 aa).

Lys-16 serves as the catalytic Schiff-base intermediate with D-ribose 5-phosphate. Arg-104 serves as a coordination point for D-glyceraldehyde 3-phosphate. D-ribose 5-phosphate is bound by residues Gly-153 and 174 to 175; that span reads GS.

This sequence belongs to the PdxS/SNZ family.

It carries out the reaction aldehydo-D-ribose 5-phosphate + D-glyceraldehyde 3-phosphate + L-glutamine = pyridoxal 5'-phosphate + L-glutamate + phosphate + 3 H2O + H(+). It functions in the pathway cofactor biosynthesis; pyridoxal 5'-phosphate biosynthesis. Its function is as follows. Catalyzes the formation of pyridoxal 5'-phosphate from ribose 5-phosphate (RBP), glyceraldehyde 3-phosphate (G3P) and ammonia. The ammonia is provided by PDX2. Can also use ribulose 5-phosphate and dihydroxyacetone phosphate as substrates, resulting from enzyme-catalyzed isomerization of RBP and G3P, respectively. Also plays an indirect role in resistance to singlet oxygen-generating photosensitizers. The protein is Probable pyridoxal 5'-phosphate synthase subunit PDX1 of Stellaria longipes (Longstalk starwort).